Here is a 596-residue protein sequence, read N- to C-terminus: Chloride intracellular channel protein 6 (596 aa).

Residues 1–360 (MAEATEPKEV…ALEEGDPGQE (360 aa)) are disordered. Basic and acidic residues predominate over residues 34–48 (LEGREASEEAAEAPR). At Ser-40 the chain carries Phosphoserine. The span at 65-74 (GCGQDEGTGG) shows a compositional bias: gly residues. A compositionally biased stretch (low complexity) spans 83–98 (GPEAETPGASGAPGEA). A compositionally biased stretch (polar residues) spans 118–130 (SAQQVQGMSSGLD). Positions 148 to 160 (DPTASEAGEEAES) are enriched in acidic residues. Composition is skewed to low complexity over residues 197–213 (GSES…PQPQ) and 225–244 (GGNE…AGEG). Positions 246-290 (TLGKDGSEEAASEDARVDAHENGDQGKLQEETGEEEARPEPELKG) are enriched in basic and acidic residues. Residue Ser-304 is modified to Phosphoserine. Basic and acidic residues predominate over residues 338–348 (ELGRVNGRREN). The G-site signature appears at 379 to 382 (CPFS). Residues 381 to 401 (FSQRLFMILWLKGVIFNVTTV) traverse the membrane as a helical segment. The 172-residue stretch at 425-596 (DGEVKTDVNK…AYSDAAKRMK (172 aa)) folds into the GST C-terminal domain.

Belongs to the chloride channel CLIC family. Monomer (soluble state). Interacts with dopamine receptors DRD2, DRD3 and DRD4. Post-translationally, phosphorylated.

The protein localises to the cytoplasm. It is found in the cell membrane. It carries out the reaction chloride(in) = chloride(out). Channel activity is redox- and pH-regulated. Inhibited by IAA-94. Functionally, in the soluble state, catalyzes glutaredoxin-like thiol disulfide exchange reactions with reduced glutathione as electron donor. Can insert into membranes and form voltage-dependent chloride-selective channels. The channel opens upon membrane depolarization at positive voltages and closes at negative membrane voltages. May play a critical role in water-secreting cells, possibly through the regulation of chloride ion transport. In Mus musculus (Mouse), this protein is Chloride intracellular channel protein 6 (Clic6).